A 199-amino-acid chain; its full sequence is Ribosome biogenesis protein RLP24 (199 aa).

The disordered stretch occupies residues 147–182; the sequence is KEQERAESVSEQEESEEEEEDMEIDSDEEEEEQLEK. Acidic residues predominate over residues 156–179; sequence SEQEESEEEEEDMEIDSDEEEEEQ. Ser172 carries the phosphoserine modification.

Belongs to the eukaryotic ribosomal protein eL24 family. Associated with nucleolar and cytoplasmic pre-60S particles. At the end of biogenesis it dissociates from cytoplasmic pre-60S particles and is likely to be exchanged for its ribosomal homolog, RPL24. Interacts (via C-terminus) with AFG2 (hexameric form); the interaction is direct, recruits AFG2 to pre-60S ribosomal particles and promotes AFG2 ATPase activity and RLP24 release from pre-60S ribosomal particles. Interacts with NOG1; the interaction is direct.

The protein resides in the cytoplasm. It is found in the nucleus. In terms of biological role, involved in the biogenesis of the 60S ribosomal subunit. Ensures the docking of NOG1 to pre-60S ribosomal particles. Activates and recruits ATPase AFG2 to cytoplasmic pre-60S ribosomal particles. The protein is Ribosome biogenesis protein RLP24 (RLP24) of Saccharomyces cerevisiae (strain ATCC 204508 / S288c) (Baker's yeast).